The primary structure comprises 540 residues: Chaperonin GroEL (540 aa).

Residues 30-33 (TLGP), 87-91 (DGTTT), Gly414, 479-481 (NAL), and Asp495 contribute to the ATP site.

This sequence belongs to the chaperonin (HSP60) family. Forms a cylinder of 14 subunits composed of two heptameric rings stacked back-to-back. Interacts with the co-chaperonin GroES.

It is found in the cytoplasm. The catalysed reaction is ATP + H2O + a folded polypeptide = ADP + phosphate + an unfolded polypeptide.. Together with its co-chaperonin GroES, plays an essential role in assisting protein folding. The GroEL-GroES system forms a nano-cage that allows encapsulation of the non-native substrate proteins and provides a physical environment optimized to promote and accelerate protein folding. This is Chaperonin GroEL from Rubrobacter xylanophilus (strain DSM 9941 / JCM 11954 / NBRC 16129 / PRD-1).